The primary structure comprises 121 residues: Alpha-endosulfine (121 aa).

The disordered stretch occupies residues 1-53; that stretch reads MSQKQEEENPAEETGEEKQDTQEKEGILPERAEEAKLKAKYPSLGQKPGGSDF. An N-acetylserine modification is found at S2. S2 carries the phosphoserine modification. The segment covering 16–37 has biased composition (basic and acidic residues); sequence EEKQDTQEKEGILPERAEEAKL. Phosphothreonine is present on T21. S43 bears the Phosphoserine mark. Position 67 is a phosphoserine; by GWL (S67). Positions 79–121 are disordered; sequence NKQLPSAGPDKNLVTGDHIPTPQDLPQRKSSLVTSKLAGGQVE. S109 is modified (phosphoserine; by PKA).

The protein belongs to the endosulfine family. In terms of assembly, interacts (when phosphorylated at Ser-67) with PPP2R2D. Interacts with ABCC8. Interacts with SNCA; interaction is disrupted when phosphorylated at Ser-109. Phosphorylation at Ser-67 by GWL during mitosis is essential for interaction with PPP2R2D (PR55-delta) and subsequent inactivation of PP2A. Phosphorylated by PKA. As to expression, widely expressed with high levels in skeletal muscle and brain and lower levels in the pancreas.

The protein localises to the cytoplasm. Protein phosphatase inhibitor that specifically inhibits protein phosphatase 2A (PP2A) during mitosis. When phosphorylated at Ser-67 during mitosis, specifically interacts with PPP2R2D (PR55-delta) and inhibits its activity, leading to inactivation of PP2A, an essential condition to keep cyclin-B1-CDK1 activity high during M phase. Also acts as a stimulator of insulin secretion by interacting with sulfonylurea receptor (ABCC8), thereby preventing sulfonylurea from binding to its receptor and reducing K(ATP) channel currents. This Homo sapiens (Human) protein is Alpha-endosulfine (ENSA).